Reading from the N-terminus, the 309-residue chain is Taste receptor type 2 member 8 (309 aa).

The Extracellular segment spans residues Met-1–Asn-7. The chain crosses the membrane as a helical span at residues Ile-8–Ala-28. The Cytoplasmic portion of the chain corresponds to Leu-29–Asn-50. Residues Leu-51–Leu-71 form a helical membrane-spanning segment. Residues Asn-72–Gln-82 are Extracellular-facing. A helical transmembrane segment spans residues Ile-83–Leu-103. Over Asn-104–His-131 the chain is Cytoplasmic. The helical transmembrane segment at Trp-132 to Leu-152 threads the bilayer. The Extracellular segment spans residues Ser-153–Thr-184. Residue Asn-167 is glycosylated (N-linked (GlcNAc...) asparagine). Residues Leu-185–Val-205 form a helical membrane-spanning segment. The Cytoplasmic portion of the chain corresponds to Arg-206–Ser-239. The helical transmembrane segment at Phe-240–Met-260 threads the bilayer. Residues Thr-261–Ala-266 lie on the Extracellular side of the membrane. Residues Val-267–Val-287 form a helical membrane-spanning segment. Topologically, residues Leu-288–Ile-309 are cytoplasmic.

This sequence belongs to the G-protein coupled receptor T2R family. Expressed in subsets of taste receptor cells of the tongue and palate epithelium and exclusively in gustducin-positive cells.

It is found in the membrane. Functionally, receptor that may play a role in the perception of bitterness and is gustducin-linked. May play a role in sensing the chemical composition of the gastrointestinal content. The activity of this receptor may stimulate alpha gustducin, mediate PLC-beta-2 activation and lead to the gating of TRPM5. The chain is Taste receptor type 2 member 8 (TAS2R8) from Homo sapiens (Human).